Consider the following 223-residue polypeptide: Small ribosomal subunit protein uS11m (223 aa).

The N-terminal 38 residues, 1 to 38 (MVLKHSVTYNLSFFISFTFSSIFFSSLILFLVYKSVLS), are a transit peptide targeting the mitochondrion.

The protein belongs to the universal ribosomal protein uS11 family. In terms of assembly, component of the mitochondrial small ribosomal subunit (mt-SSU). Mature yeast 74S mitochondrial ribosomes consist of a small (37S) and a large (54S) subunit. The 37S small subunit contains a 15S ribosomal RNA (15S mt-rRNA) and at least 32 different proteins. The 54S large subunit contains a 21S rRNA (21S mt-rRNA) and at least 45 different proteins.

The protein localises to the mitochondrion. Functionally, component of the mitochondrial ribosome (mitoribosome), a dedicated translation machinery responsible for the synthesis of mitochondrial genome-encoded proteins, including at least some of the essential transmembrane subunits of the mitochondrial respiratory chain. The mitoribosomes are attached to the mitochondrial inner membrane and translation products are cotranslationally integrated into the membrane. In Schizosaccharomyces pombe (strain 972 / ATCC 24843) (Fission yeast), this protein is Small ribosomal subunit protein uS11m (mrps18).